The primary structure comprises 183 residues: MAASMARGGVSARVLLQAARGTWWNRPGGTSGSGEGVALGTTRKFQATGSRPAGEEDAGGPERPGDVVNVVFVDRSGQRIPVSGRVGDNVLHLAQRHGVDLEGACEASLACSTCHVYVSEDHLDLLPPPEEREDDMLDMAPLLQENSRLGCQIVLTPELEGAEFTLPKITRNFYVDGHVPKPH.

A mitochondrion-targeting transit peptide spans 1–52 (MAASMARGGVSARVLLQAARGTWWNRPGGTSGSGEGVALGTTRKFQATGSRP). The disordered stretch occupies residues 45-65 (FQATGSRPAGEEDAGGPERPG). Residues 68 to 170 (VNVVFVDRSG…GAEFTLPKIT (103 aa)) form the 2Fe-2S ferredoxin-type domain. 4 residues coordinate [2Fe-2S] cluster: C105, C111, C114, and C151.

This sequence belongs to the adrenodoxin/putidaredoxin family. Component of the mitochondrial core iron-sulfur cluster (ISC) complex composed of NFS1, LYRM4, NDUFAB1, ISCU, FXN, and FDX2; this complex is a heterohexamer containing two copies of each monomer. Form a heterodimer complex with NFS1. Interacts (in both their reduced and oxidized states) with the cysteine desulfurase complex; this interaction stimulates cysteine desulfurase activity, and serves as a reductant for Fe-S cluster assembly. [2Fe-2S] cluster serves as cofactor. As to expression, widely expressed, with highest levels in testis, kidney and brain (at protein level). Expressed in muscle (at protein level). Expressed in fibroblasts (at protein level).

Its subcellular location is the mitochondrion. The protein localises to the mitochondrion matrix. Functionally, electron donor, of the core iron-sulfur cluster (ISC) assembly complex, that acts to reduce the persulfide into sulfide during [2Fe-2S] clusters assembly on the scaffolding protein ISCU. The core iron-sulfur cluster (ISC) assembly complex is involved in the de novo synthesis of a [2Fe-2S] cluster, the first step of the mitochondrial iron-sulfur protein biogenesis. This process is initiated by the cysteine desulfurase complex (NFS1:LYRM4:NDUFAB1) that produces persulfide which is delivered on the scaffold protein ISCU in a FXN-dependent manner. Then this complex is stabilized by FDX2 which provides reducing equivalents to accomplish the [2Fe-2S] cluster assembly. Finally, the [2Fe-2S] cluster is transferred from ISCU to chaperone proteins, including HSCB, HSPA9 and GLRX5. Essential for coenzyme Q biosynthesis: together with FDXR, transfers the electrons required for the hydroxylation reaction performed by COQ6. This Homo sapiens (Human) protein is Ferredoxin-2, mitochondrial.